A 483-amino-acid chain; its full sequence is Dual specificity protein kinase CLK1 (483 aa).

Residues 1–49 (MRHSKRTYCPDWDERDWDYGTWRSSSSHKRKKRSHSSAREQKRCRYDHS) form a disordered region. Residues 26–36 (SSHKRKKRSHS) are compositionally biased toward basic residues. A Nuclear localization signal motif is present at residues 29–33 (KRKKR). The span at 37–49 (SAREQKRCRYDHS) shows a compositional bias: basic and acidic residues. S61 is modified (phosphoserine). Residues 84–111 (EPGHPYGEPGSRYQMHSSKSSGRSGRSS) show a composition bias toward low complexity. The interval 84 to 146 (EPGHPYGEPG…SRSVEDDEEG (63 aa)) is disordered. Over residues 112–137 (YKSKHRSRHHTSQHHSHGKSHRRKRS) the composition is skewed to basic residues. S139 bears the Phosphoserine mark. Residues 160–476 (YEIVDTLGEG…LKEALKHPFF (317 aa)) form the Protein kinase domain. Residues 166 to 174 (LGEGAFGKV) and K190 each bind ATP. D287 acts as the Proton acceptor in catalysis.

The protein belongs to the protein kinase superfamily. CMGC Ser/Thr protein kinase family. Lammer subfamily. In terms of assembly, interacts with PPIG and UBL5. Post-translationally, autophosphorylates on all three types of residues.

It is found in the nucleus. It carries out the reaction L-seryl-[protein] + ATP = O-phospho-L-seryl-[protein] + ADP + H(+). The catalysed reaction is L-threonyl-[protein] + ATP = O-phospho-L-threonyl-[protein] + ADP + H(+). The enzyme catalyses L-tyrosyl-[protein] + ATP = O-phospho-L-tyrosyl-[protein] + ADP + H(+). Its activity is regulated as follows. Regulates splicing of its own pre-mRNA according to its kinase activity; increased expression of the catalytically active form influences splicing to generate the catalytically inactive splicing variant lacking the kinase domain. Leucettine L41 inhibits its kinase activity and affects the regulation of alternative splicing mediated by phosphorylation of SR proteins. Functionally, dual specificity kinase acting on both serine/threonine and tyrosine-containing substrates. Phosphorylates serine- and arginine-rich (SR) proteins of the spliceosomal complex and may be a constituent of a network of regulatory mechanisms that enable SR proteins to control RNA splicing. Phosphorylates: SRSF1, SRSF3 and PTPN1. Regulates the alternative splicing of tissue factor (F3) pre-mRNA in endothelial cells. The chain is Dual specificity protein kinase CLK1 from Mus musculus (Mouse).